Here is a 32-residue protein sequence, read N- to C-terminus: Apolipophorin-3 (32 aa).

The segment at 1-32 is disordered; that stretch reads DAPSTTPPQDXEKKAAEFQKTFTEQXNQLANK. Residues 20 to 32 are compositionally biased toward polar residues; sequence KTFTEQXNQLANK.

It belongs to the insect apolipophorin-3 family. Equilibrium between a soluble monomer and a bound lipoprotein form. Apolipophorin-3 associates with lipophorin during lipid loading until each particle contains 9 or 14 molecules of apolipophorin-3. As to expression, hemolymph.

The protein localises to the secreted. In terms of biological role, assists in the loading of diacylglycerol, generated from triacylglycerol stores in the fat body through the action of adipokinetic hormone, into lipophorin, the hemolymph lipoprotein. It increases the lipid carrying capacity of lipophorin by covering the expanding hydrophobic surface resulting from diacylglycerol uptake. It thus plays a critical role in the transport of lipids during flight in several species of insects. The chain is Apolipophorin-3 from Diatraea grandiosella (Southwestern corn borer).